The chain runs to 547 residues: Probable bifunctional tRNA threonylcarbamoyladenosine biosynthesis protein (547 aa).

A kae1 region spans residues 1-329 (MKNTFILGIE…FRTDDVNVTW (329 aa)). Histidine 113, histidine 117, and tyrosine 134 together coordinate Fe cation. Residues 134–138 (YVSGA), aspartate 166, glycine 179, glutamate 183, and asparagine 262 each bind L-threonylcarbamoyladenylate. Aspartate 290 is a binding site for Fe cation. Positions 340–547 (EISPEAFLRA…EEIKKRARYA (208 aa)) constitute a Protein kinase domain. Residues 355–363 (LDNGAEAVI) and lysine 377 each bind ATP. Aspartate 464 acts as the Proton acceptor; for kinase activity in catalysis.

In the N-terminal section; belongs to the KAE1 / TsaD family. It in the C-terminal section; belongs to the protein kinase superfamily. Tyr protein kinase family. BUD32 subfamily. As to quaternary structure, component of the KEOPS complex that consists of Kae1, Bud32, Cgi121 and Pcc1; the whole complex dimerizes. It depends on Fe(2+) as a cofactor.

The protein resides in the cytoplasm. The catalysed reaction is L-seryl-[protein] + ATP = O-phospho-L-seryl-[protein] + ADP + H(+). The enzyme catalyses L-threonyl-[protein] + ATP = O-phospho-L-threonyl-[protein] + ADP + H(+). It catalyses the reaction L-threonylcarbamoyladenylate + adenosine(37) in tRNA = N(6)-L-threonylcarbamoyladenosine(37) in tRNA + AMP + H(+). In terms of biological role, required for the formation of a threonylcarbamoyl group on adenosine at position 37 (t(6)A37) in tRNAs that read codons beginning with adenine. Is a component of the KEOPS complex that is probably involved in the transfer of the threonylcarbamoyl moiety of threonylcarbamoyl-AMP (TC-AMP) to the N6 group of A37. The Kae1 domain likely plays a direct catalytic role in this reaction. The Bud32 domain probably displays kinase activity that regulates Kae1 function. In Methanosarcina acetivorans (strain ATCC 35395 / DSM 2834 / JCM 12185 / C2A), this protein is Probable bifunctional tRNA threonylcarbamoyladenosine biosynthesis protein.